We begin with the raw amino-acid sequence, 125 residues long: MIYGIGTDLVDPARIASSLERYGEQFARRVLADSEWPDYLEHIKPALFLAKRFAAKEAFSKATGTGLRAPVMFGNMAVQHDSQGKPYFEFQQELAEWIGQRGITRHHLSISDELTMVSAFVVLEK.

Mg(2+) contacts are provided by Asp8 and Glu57.

The protein belongs to the P-Pant transferase superfamily. AcpS family. Mg(2+) is required as a cofactor.

The protein resides in the cytoplasm. It carries out the reaction apo-[ACP] + CoA = holo-[ACP] + adenosine 3',5'-bisphosphate + H(+). In terms of biological role, transfers the 4'-phosphopantetheine moiety from coenzyme A to a Ser of acyl-carrier-protein. The sequence is that of Holo-[acyl-carrier-protein] synthase from Nitrosomonas europaea (strain ATCC 19718 / CIP 103999 / KCTC 2705 / NBRC 14298).